The chain runs to 85 residues: Small ribosomal subunit protein uS17 (85 aa).

Belongs to the universal ribosomal protein uS17 family. As to quaternary structure, part of the 30S ribosomal subunit.

Its function is as follows. One of the primary rRNA binding proteins, it binds specifically to the 5'-end of 16S ribosomal RNA. In Acinetobacter baumannii (strain AB307-0294), this protein is Small ribosomal subunit protein uS17.